A 142-amino-acid chain; its full sequence is Ribosomal RNA large subunit methyltransferase H (142 aa).

An S-adenosyl-L-methionine-binding site is contributed by G89.

This sequence belongs to the RNA methyltransferase RlmH family. As to quaternary structure, homodimer.

Its subcellular location is the cytoplasm. The enzyme catalyses pseudouridine(1915) in 23S rRNA + S-adenosyl-L-methionine = N(3)-methylpseudouridine(1915) in 23S rRNA + S-adenosyl-L-homocysteine + H(+). Its function is as follows. Specifically methylates the pseudouridine at position 1915 (m3Psi1915) in 23S rRNA. This chain is Ribosomal RNA large subunit methyltransferase H, found in Zymomonas mobilis subsp. mobilis (strain ATCC 31821 / ZM4 / CP4).